The primary structure comprises 284 residues: NAD kinase (284 aa).

D60 acts as the Proton acceptor in catalysis. NAD(+)-binding positions include 60 to 61 (DG), 134 to 135 (NE), R145, K162, D164, 175 to 180 (TAYSFS), and Q234.

Belongs to the NAD kinase family. A divalent metal cation is required as a cofactor.

Its subcellular location is the cytoplasm. It carries out the reaction NAD(+) + ATP = ADP + NADP(+) + H(+). Involved in the regulation of the intracellular balance of NAD and NADP, and is a key enzyme in the biosynthesis of NADP. Catalyzes specifically the phosphorylation on 2'-hydroxyl of the adenosine moiety of NAD to yield NADP. This chain is NAD kinase, found in Clostridium botulinum (strain Eklund 17B / Type B).